The primary structure comprises 102 residues: Large ribosomal subunit protein bL21 (102 aa).

This sequence belongs to the bacterial ribosomal protein bL21 family. As to quaternary structure, part of the 50S ribosomal subunit. Contacts protein L20.

Its function is as follows. This protein binds to 23S rRNA in the presence of protein L20. In Ehrlichia chaffeensis (strain ATCC CRL-10679 / Arkansas), this protein is Large ribosomal subunit protein bL21.